Reading from the N-terminus, the 121-residue chain is Phosphoribosyl-ATP pyrophosphatase (121 aa).

The protein belongs to the PRA-PH family.

It localises to the cytoplasm. The enzyme catalyses 1-(5-phospho-beta-D-ribosyl)-ATP + H2O = 1-(5-phospho-beta-D-ribosyl)-5'-AMP + diphosphate + H(+). It functions in the pathway amino-acid biosynthesis; L-histidine biosynthesis; L-histidine from 5-phospho-alpha-D-ribose 1-diphosphate: step 2/9. The chain is Phosphoribosyl-ATP pyrophosphatase from Burkholderia cenocepacia (strain ATCC BAA-245 / DSM 16553 / LMG 16656 / NCTC 13227 / J2315 / CF5610) (Burkholderia cepacia (strain J2315)).